Reading from the N-terminus, the 320-residue chain is Malate dehydrogenase (320 aa).

NAD(+)-binding positions include 10–15 (GSGMIG) and aspartate 34. Substrate-binding residues include arginine 83 and arginine 89. Residues asparagine 96 and 119 to 121 (ITN) each bind NAD(+). Residues asparagine 121 and arginine 152 each coordinate substrate. Residue histidine 176 is the Proton acceptor of the active site.

This sequence belongs to the LDH/MDH superfamily. MDH type 3 family.

It carries out the reaction (S)-malate + NAD(+) = oxaloacetate + NADH + H(+). In terms of biological role, catalyzes the reversible oxidation of malate to oxaloacetate. This Maricaulis maris (strain MCS10) (Caulobacter maris) protein is Malate dehydrogenase.